The chain runs to 217 residues: UPF0193 protein EVG1 (217 aa).

It belongs to the UPF0193 (EVG1) family.

The polypeptide is UPF0193 protein EVG1 (C22orf23) (Homo sapiens (Human)).